Reading from the N-terminus, the 234-residue chain is Zein-alpha A30 (234 aa).

A signal peptide spans 1–21 (MAAKIFCLLMLLGLSASAATA).

It belongs to the zein family.

Functionally, zeins are major seed storage proteins. This is Zein-alpha A30 from Zea mays (Maize).